A 347-amino-acid chain; its full sequence is N-acetyl-gamma-glutamyl-phosphate reductase (347 aa).

Residue Cys152 is part of the active site.

Belongs to the NAGSA dehydrogenase family. Type 1 subfamily.

The protein resides in the cytoplasm. The enzyme catalyses N-acetyl-L-glutamate 5-semialdehyde + phosphate + NADP(+) = N-acetyl-L-glutamyl 5-phosphate + NADPH + H(+). The protein operates within amino-acid biosynthesis; L-arginine biosynthesis; N(2)-acetyl-L-ornithine from L-glutamate: step 3/4. Catalyzes the NADPH-dependent reduction of N-acetyl-5-glutamyl phosphate to yield N-acetyl-L-glutamate 5-semialdehyde. The polypeptide is N-acetyl-gamma-glutamyl-phosphate reductase (Neisseria gonorrhoeae (strain ATCC 700825 / FA 1090)).